The primary structure comprises 281 residues: NADPH-dependent 7-cyano-7-deazaguanine reductase (281 aa).

88 to 90 (VES) contacts substrate. 90 to 91 (SK) contributes to the NADPH binding site. C189 (thioimide intermediate) is an active-site residue. The Proton donor role is filled by D196. Position 228-229 (228-229 (HE)) interacts with substrate. 257 to 258 (RG) contributes to the NADPH binding site.

This sequence belongs to the GTP cyclohydrolase I family. QueF type 2 subfamily. In terms of assembly, homodimer.

The protein resides in the cytoplasm. It carries out the reaction 7-aminomethyl-7-carbaguanine + 2 NADP(+) = 7-cyano-7-deazaguanine + 2 NADPH + 3 H(+). It participates in tRNA modification; tRNA-queuosine biosynthesis. Its function is as follows. Catalyzes the NADPH-dependent reduction of 7-cyano-7-deazaguanine (preQ0) to 7-aminomethyl-7-deazaguanine (preQ1). This is NADPH-dependent 7-cyano-7-deazaguanine reductase from Klebsiella pneumoniae (strain 342).